A 448-amino-acid chain; its full sequence is MAKRGRKPKELVPGPGSIDPSDVPKLEGASVPVMSTSYDVVVDREFDELLQGKDGLLVYHKMLSDGTVKNALNYIFGRIRSAKWYVEPASTDPEDIAIAAFIHAQLGIDDASVGKYPFGRLFAIYENAYIYGMAAGEIVLTLGADGKLILDKIVPIHPFNIDEVLYDEEGGPKALKLSGEVKGGSQFVNGLEIPIWKTVVFLHNDDGSFTGQSALRAAVPHWLAKRALILLINHGLERFMIGVPTLTIPKSVRQGTKQWEAAKEIVKNFVQKPRHGIILPDDWKFDTVDLKSAMPDAIPYLTYHDAGIARALGIDFNTVQLNMGVQAVNIGEFVSLTQQTIISLQREFASAVNLYLIPKLVLPNWPGATRFPRLTFEMEERNDFSAAANLMGMLINAVKDSEDIPTELKALIDALPSKMRRALGVVDEVREAVRQPADSRYLYTRRRR.

A disordered region spans residues 1–25 (MAKRGRKPKELVPGPGSIDPSDVPK).

This sequence belongs to the P23virus portal protein family. Homododecamer. Interacts with the capsid protein. Interacts with the terminase large subunit; this interaction allows the packaging of viral DNA.

The protein resides in the virion. Its function is as follows. Forms the portal vertex of the capsid. This portal plays critical roles in head assembly, genome packaging, neck/tail attachment, and genome ejection. The portal protein multimerizes as a single ring-shaped homododecamer arranged around a central channel. Forms the portal vertex of the capsid. This portal plays critical roles in head assembly, genome packaging, neck/tail attachment, and genome ejection. This Thermus thermophilus (Thermus thermophilus phage P23-45) protein is Portal protein.